Reading from the N-terminus, the 338-residue chain is Phenylalanine--tRNA ligase alpha subunit (338 aa).

E252 lines the Mg(2+) pocket.

Belongs to the class-II aminoacyl-tRNA synthetase family. Phe-tRNA synthetase alpha subunit type 1 subfamily. As to quaternary structure, tetramer of two alpha and two beta subunits. Mg(2+) serves as cofactor.

The protein localises to the cytoplasm. The enzyme catalyses tRNA(Phe) + L-phenylalanine + ATP = L-phenylalanyl-tRNA(Phe) + AMP + diphosphate + H(+). In Pseudomonas syringae pv. tomato (strain ATCC BAA-871 / DC3000), this protein is Phenylalanine--tRNA ligase alpha subunit.